The chain runs to 524 residues: MLRLTVKHGLRANSQLAATRNPDASSYVQQLESEWEGAKPFTELPGPTRWQLFRGFQKGGEYHQLGMDDVMRLYKKQFGDICLIPGLFGMPSTVFTFNVETFEKVYRTEGQWPVRGGAEPVIHYRNKRKDEFFKNCMGLFGNGAEWGKNRSAVNPVLMQHRNVAIYLKPMQRVNRQFVNRIREIRDKESQEVPGDFMNTINHLTFESVATVALDRELGLLREANPPPEASKLFKNIEVLMDSFFDLGVRPSLYRYIPTPTYKKFSRAMDEIFDTCSMYVNQAIERIDRKSSQGDSNDHKSVLEQLLQIDRKLAVVMAMDMLMGGVDTTSTAISGILLNLAKNPEKQQRLREEVLSKLTSLHSEFTVEDMKSLPYLRAVIKESLRLYPVTFGNARSAGADVVLDGYRIPKGTKLLMTNSFLLKDDRLYPRAKEFIPERWLRRKDDDKSDVLMNKDLNAFIYLPFGFGPRMCVGKRIVDLEMELTVANLVRNFHIEYNYSTEKPYKCRFLYKPNIPLKFKFTDLKY.

Cys470 contacts heme.

The protein belongs to the cytochrome P450 family. It depends on heme as a cofactor.

It localises to the mitochondrion membrane. This chain is Probable cytochrome P450 12c1, mitochondrial (Cyp12c1), found in Drosophila melanogaster (Fruit fly).